The chain runs to 208 residues: Large ribosomal subunit protein uL4 (208 aa).

A disordered region spans residues 45–85 (RQGTHKAKTRAQVRGGGRKPYRQKGTGNARQGSTRSPLMIG). The segment covering 46-66 (QGTHKAKTRAQVRGGGRKPYR) has biased composition (basic residues). The span at 69–80 (GTGNARQGSTRS) shows a compositional bias: polar residues.

It belongs to the universal ribosomal protein uL4 family. In terms of assembly, part of the 50S ribosomal subunit.

Functionally, one of the primary rRNA binding proteins, this protein initially binds near the 5'-end of the 23S rRNA. It is important during the early stages of 50S assembly. It makes multiple contacts with different domains of the 23S rRNA in the assembled 50S subunit and ribosome. In terms of biological role, forms part of the polypeptide exit tunnel. The protein is Large ribosomal subunit protein uL4 of Chlorobium phaeobacteroides (strain DSM 266 / SMG 266 / 2430).